The following is a 266-amino-acid chain: Aspartate/glutamate leucyltransferase (266 aa).

Belongs to the R-transferase family. Bpt subfamily.

The protein localises to the cytoplasm. The catalysed reaction is N-terminal L-glutamyl-[protein] + L-leucyl-tRNA(Leu) = N-terminal L-leucyl-L-glutamyl-[protein] + tRNA(Leu) + H(+). The enzyme catalyses N-terminal L-aspartyl-[protein] + L-leucyl-tRNA(Leu) = N-terminal L-leucyl-L-aspartyl-[protein] + tRNA(Leu) + H(+). In terms of biological role, functions in the N-end rule pathway of protein degradation where it conjugates Leu from its aminoacyl-tRNA to the N-termini of proteins containing an N-terminal aspartate or glutamate. The polypeptide is Aspartate/glutamate leucyltransferase (Rhizorhabdus wittichii (strain DSM 6014 / CCUG 31198 / JCM 15750 / NBRC 105917 / EY 4224 / RW1) (Sphingomonas wittichii)).